The sequence spans 347 residues: Leucine-rich repeat-containing protein 69 (347 aa).

LRR repeat units follow at residues 38–60 (GLKT…CNLT), 61–82 (QLTT…MKYL), 84–105 (SLKN…ACDG), 108–129 (NLIL…VSRL), 131–153 (SLTY…CFLE), 154–175 (NLVE…IKFL), 177–199 (KLQK…CDLK), and 200–222 (KLRI…QDLK).

The protein belongs to the LRRC69 family.

The chain is Leucine-rich repeat-containing protein 69 (LRRC69) from Homo sapiens (Human).